The chain runs to 49 residues: SPbeta prophage-derived uncharacterized protein YoqT (49 aa).

The helical transmembrane segment at 7–29 (CFVNWSFDKIMDYILIAGLYFVF) threads the bilayer.

The protein localises to the cell membrane. The protein is SPbeta prophage-derived uncharacterized protein YoqT (yoqT) of Bacillus subtilis (strain 168).